The primary structure comprises 387 residues: Protein kinase gsk3 (387 aa).

A Protein kinase domain is found at 32–316 (YTSSKVVGSG…AAEAMCHPFF (285 aa)). Residues 38–46 (VGSGSFGVV) and Lys61 each bind ATP. Asp157 functions as the Proton acceptor in the catalytic mechanism. Ser191 carries the post-translational modification Phosphoserine. The residue at position 192 (Tyr192) is a Phosphotyrosine; by autocatalysis. Ser335 carries the post-translational modification Phosphoserine.

Belongs to the protein kinase superfamily. CMGC Ser/Thr protein kinase family. GSK-3 subfamily. Post-translationally, autophosphorylated on tyrosine residues.

It localises to the cytoplasm. It is found in the nucleus. The catalysed reaction is L-seryl-[protein] + ATP = O-phospho-L-seryl-[protein] + ADP + H(+). It carries out the reaction L-threonyl-[protein] + ATP = O-phospho-L-threonyl-[protein] + ADP + H(+). Its function is as follows. Interacts with cdc14 which is thought to play a role in the initiation and completion of mitosis. Involved in the positive regulation of mis12. The protein is Protein kinase gsk3 (gsk3) of Schizosaccharomyces pombe (strain 972 / ATCC 24843) (Fission yeast).